Here is a 168-residue protein sequence, read N- to C-terminus: Sec-independent protein translocase protein TatB (168 aa).

A helical membrane pass occupies residues M1–G21. Disordered stretches follow at residues F92 to R132 and V146 to E168. Positions G94–G107 are enriched in low complexity. A compositionally biased stretch (basic residues) spans K117–R126.

This sequence belongs to the TatB family. The Tat system comprises two distinct complexes: a TatABC complex, containing multiple copies of TatA, TatB and TatC subunits, and a separate TatA complex, containing only TatA subunits. Substrates initially bind to the TatABC complex, which probably triggers association of the separate TatA complex to form the active translocon.

It is found in the cell inner membrane. Its function is as follows. Part of the twin-arginine translocation (Tat) system that transports large folded proteins containing a characteristic twin-arginine motif in their signal peptide across membranes. Together with TatC, TatB is part of a receptor directly interacting with Tat signal peptides. TatB may form an oligomeric binding site that transiently accommodates folded Tat precursor proteins before their translocation. The protein is Sec-independent protein translocase protein TatB of Cupriavidus metallidurans (strain ATCC 43123 / DSM 2839 / NBRC 102507 / CH34) (Ralstonia metallidurans).